The primary structure comprises 370 residues: Calcium/calmodulin-dependent protein kinase type 1 (370 aa).

The region spanning 20 to 276 (YDFRDVLGTG…CEQALQHPWI (257 aa)) is the Protein kinase domain. ATP contacts are provided by residues 26 to 34 (LGTGAFSEV) and K49. K59 is covalently cross-linked (Glycyl lysine isopeptide (Lys-Gly) (interchain with G-Cter in ubiquitin)). Catalysis depends on D141, which acts as the Proton acceptor. The residue at position 177 (T177) is a Phosphothreonine; by CaMKK1 and CaMKK2. The tract at residues 276–316 (IAGDTALDKNIHQSVSEQIKKNFAKSKWKQAFNATAVVRHM) is autoinhibitory domain. Residues 296-317 (KNFAKSKWKQAFNATAVVRHMR) are calmodulin-binding. The Nuclear export signal signature appears at 315 to 321 (HMRKLQL). Position 363 is a phosphoserine (S363).

Belongs to the protein kinase superfamily. CAMK Ser/Thr protein kinase family. CaMK subfamily. Monomer. Interacts with XPO1. Interacts with MARK2, ARHGEF7/BETAPIX and GIT1. Post-translationally, phosphorylated by CaMKK1 and CaMKK2 on Thr-177. Polybiquitinated by the E3 ubiquitin-protein ligase complex SCF(FBXL12), leading to proteasomal degradation. In terms of tissue distribution, widely expressed. Expressed in cells of the zona glomerulosa of the adrenal cortex.

The protein localises to the cytoplasm. Its subcellular location is the nucleus. The catalysed reaction is L-seryl-[protein] + ATP = O-phospho-L-seryl-[protein] + ADP + H(+). It carries out the reaction L-threonyl-[protein] + ATP = O-phospho-L-threonyl-[protein] + ADP + H(+). Activated by Ca(2+)/calmodulin. Binding of calmodulin results in conformational change that relieves intrasteric autoinhibition and allows phosphorylation of Thr-177 within the activation loop by CaMKK1 or CaMKK2. Phosphorylation of Thr-177 results in several fold increase in total activity. Unlike CaMK4, is unable to exhibit autonomous activity after Ca(2+)/calmodulin activation. In terms of biological role, calcium/calmodulin-dependent protein kinase that operates in the calcium-triggered CaMKK-CaMK1 signaling cascade and, upon calcium influx, regulates transcription activators activity, cell cycle, hormone production, cell differentiation, actin filament organization and neurite outgrowth. Recognizes the substrate consensus sequence [MVLIF]-x-R-x(2)-[ST]-x(3)-[MVLIF]. Regulates axonal extension and growth cone motility in hippocampal and cerebellar nerve cells. Upon NMDA receptor-mediated Ca(2+) elevation, promotes dendritic growth in hippocampal neurons and is essential in synapses for full long-term potentiation (LTP) and ERK2-dependent translational activation. Downstream of NMDA receptors, promotes the formation of spines and synapses in hippocampal neurons by phosphorylating ARHGEF7/BETAPIX on 'Ser-694', which results in the enhancement of ARHGEF7 activity and activation of RAC1. Promotes neuronal differentiation and neurite outgrowth by activation and phosphorylation of MARK2 on 'Ser-91', 'Ser-92', 'Ser-93' and 'Ser-294'. Promotes nuclear export of HDAC5 and binding to 14-3-3 by phosphorylation of 'Ser-259' and 'Ser-498' in the regulation of muscle cell differentiation. Regulates NUMB-mediated endocytosis by phosphorylation of NUMB on 'Ser-276' and 'Ser-295'. Involved in the regulation of basal and estrogen-stimulated migration of medulloblastoma cells through ARHGEF7/BETAPIX phosphorylation. Is required for proper activation of cyclin-D1/CDK4 complex during G1 progression in diploid fibroblasts. Plays a role in K(+) and ANG2-mediated regulation of the aldosterone synthase (CYP11B2) to produce aldosterone in the adrenal cortex. Phosphorylates EIF4G3/eIF4GII. In vitro phosphorylates CREB1, ATF1, CFTR, MYL9 and SYN1/synapsin I. The sequence is that of Calcium/calmodulin-dependent protein kinase type 1 (CAMK1) from Homo sapiens (Human).